Reading from the N-terminus, the 244-residue chain is tRNA1(Val) (adenine(37)-N6)-methyltransferase (244 aa).

This sequence belongs to the methyltransferase superfamily. tRNA (adenine-N(6)-)-methyltransferase family.

It is found in the cytoplasm. The catalysed reaction is adenosine(37) in tRNA1(Val) + S-adenosyl-L-methionine = N(6)-methyladenosine(37) in tRNA1(Val) + S-adenosyl-L-homocysteine + H(+). Specifically methylates the adenine in position 37 of tRNA(1)(Val) (anticodon cmo5UAC). In Photorhabdus laumondii subsp. laumondii (strain DSM 15139 / CIP 105565 / TT01) (Photorhabdus luminescens subsp. laumondii), this protein is tRNA1(Val) (adenine(37)-N6)-methyltransferase.